Here is a 117-residue protein sequence, read N- to C-terminus: DNA-directed RNA polymerase subunit omega (117 aa).

It belongs to the RNA polymerase subunit omega family. In terms of assembly, the RNAP catalytic core consists of 2 alpha, 1 beta, 1 beta' and 1 omega subunit. When a sigma factor is associated with the core the holoenzyme is formed, which can initiate transcription.

The catalysed reaction is RNA(n) + a ribonucleoside 5'-triphosphate = RNA(n+1) + diphosphate. Promotes RNA polymerase assembly. Latches the N- and C-terminal regions of the beta' subunit thereby facilitating its interaction with the beta and alpha subunits. The protein is DNA-directed RNA polymerase subunit omega of Cereibacter sphaeroides (strain ATCC 17029 / ATH 2.4.9) (Rhodobacter sphaeroides).